The sequence spans 81 residues: Large ribosomal subunit protein bL31 (81 aa).

The protein belongs to the bacterial ribosomal protein bL31 family. Type A subfamily. Part of the 50S ribosomal subunit.

In terms of biological role, binds the 23S rRNA. This chain is Large ribosomal subunit protein bL31, found in Synechocystis sp. (strain ATCC 27184 / PCC 6803 / Kazusa).